The following is a 478-amino-acid chain: Protein adenylyltransferase VbhT (478 aa).

The 146-residue stretch at 55 to 200 (FDLDHMKKIH…RRNLTEFTVN (146 aa)) folds into the Fido domain. Residues 85–88 (KDNS), 133–136 (NALH), 140–147 (EGNGRTLR), and serine 175 each bind ATP.

In terms of assembly, homodimer. Interacts with VbhA.

It carries out the reaction L-tyrosyl-[protein] + ATP = O-(5'-adenylyl)-L-tyrosyl-[protein] + diphosphate. The catalysed reaction is L-threonyl-[protein] + ATP = 3-O-(5'-adenylyl)-L-threonyl-[protein] + diphosphate. Adenylyltransferase activity is inhibited by antitoxin VbhA; which acts by competing with ATP-binding at Arg-147 and prevents productive ATP-binding. Functionally, toxic component of type II toxin-antitoxin (TA) system VbhT-VbhA. Adenylyltransferase involved in virulence by mediating the addition of adenosine 5'-monophosphate (AMP) to specific residue of host GTPases. The resulting AMPylation affects GTPases, impairing actin assembly in infected cells. The chain is Protein adenylyltransferase VbhT (vbhT) from Bartonella schoenbuchensis (strain DSM 13525 / NCTC 13165 / R1).